We begin with the raw amino-acid sequence, 403 residues long: Phosphoglycerate kinase (403 aa).

Residues 21 to 23 (DFN), Arg37, 60 to 63 (HLGR), Arg125, and Arg158 contribute to the substrate site. ATP-binding positions include Lys209, Glu332, and 359-362 (GGDS).

This sequence belongs to the phosphoglycerate kinase family. Monomer.

It is found in the cytoplasm. It carries out the reaction (2R)-3-phosphoglycerate + ATP = (2R)-3-phospho-glyceroyl phosphate + ADP. It participates in carbohydrate degradation; glycolysis; pyruvate from D-glyceraldehyde 3-phosphate: step 2/5. The polypeptide is Phosphoglycerate kinase (Koribacter versatilis (strain Ellin345)).